A 111-amino-acid chain; its full sequence is Mitochondrial import inner membrane translocase subunit TIM14 (111 aa).

At 1 to 3 (MTG) the chain is on the mitochondrial intermembrane side. Residues 4-24 (GLIAAGLGLAAVGFGARYVLR) traverse the membrane as a helical segment. At 25-111 (NQALIKKGME…AKDLMESTKS (87 aa)) the chain is on the mitochondrial matrix side. Residues 58 to 111 (EAAKILGITPSAKPAKIKDAHKKVMIVNHPDRGGSPYLAAKINEAKDLMESTKS) enclose the J domain.

It belongs to the TIM14 family. As to quaternary structure, probable component of the PAM complex at least composed of a mitochondrial HSP70 protein, GrpE, tim-44, tim-16 and tim-14.

The protein resides in the mitochondrion inner membrane. Functionally, probable component of the PAM complex, a complex required for the translocation of transit peptide-containing proteins from the inner membrane into the mitochondrial matrix in an ATP-dependent manner. May act as a co-chaperone that stimulate the ATP-dependent activity. In Caenorhabditis briggsae, this protein is Mitochondrial import inner membrane translocase subunit TIM14 (dnj-21).